The primary structure comprises 183 residues: Ribosome rescue factor SmrB (183 aa).

In terms of domain architecture, Smr spans 98–173; sequence LDLHGLTQLQ…GDAALLVLIE (76 aa).

It belongs to the SmrB family. As to quaternary structure, associates with collided ribosomes, but not with correctly translating polysomes.

Functionally, acts as a ribosome collision sensor. Detects stalled/collided disomes (pairs of ribosomes where the leading ribosome is stalled and a second ribosome has collided with it) and endonucleolytically cleaves mRNA at the 5' boundary of the stalled ribosome. Stalled/collided disomes form a new interface (primarily via the 30S subunits) that binds SmrB. Cleaved mRNA becomes available for tmRNA ligation, leading to ribosomal subunit dissociation and rescue of stalled ribosomes. This is Ribosome rescue factor SmrB from Escherichia coli O17:K52:H18 (strain UMN026 / ExPEC).